Consider the following 921-residue polypeptide: Isoleucine--tRNA ligase (921 aa).

Residues Pro-57 to His-67 carry the 'HIGH' region motif. Glu-552 lines the L-isoleucyl-5'-AMP pocket. A 'KMSKS' region motif is present at residues Lys-593 to Ser-597. ATP is bound at residue Lys-596. Cys-888, Cys-891, Cys-908, and Cys-911 together coordinate Zn(2+).

Belongs to the class-I aminoacyl-tRNA synthetase family. IleS type 1 subfamily. In terms of assembly, monomer. The cofactor is Zn(2+).

It is found in the cytoplasm. The enzyme catalyses tRNA(Ile) + L-isoleucine + ATP = L-isoleucyl-tRNA(Ile) + AMP + diphosphate. Catalyzes the attachment of isoleucine to tRNA(Ile). As IleRS can inadvertently accommodate and process structurally similar amino acids such as valine, to avoid such errors it has two additional distinct tRNA(Ile)-dependent editing activities. One activity is designated as 'pretransfer' editing and involves the hydrolysis of activated Val-AMP. The other activity is designated 'posttransfer' editing and involves deacylation of mischarged Val-tRNA(Ile). The protein is Isoleucine--tRNA ligase of Listeria monocytogenes serotype 4b (strain F2365).